Reading from the N-terminus, the 366-residue chain is Carbamoyl phosphate synthase small chain (366 aa).

Positions 1–172 (MYGILVLEDG…TYNAENEKTS (172 aa)) are CPSase. Residues S45, G220, and G222 each contribute to the L-glutamine site. The Glutamine amidotransferase type-1 domain occupies 172–363 (SCVLIDCGVK…VELGIKFKAE (192 aa)). C247 acts as the Nucleophile in catalysis. Residues L248, Q251, N289, G291, and F292 each coordinate L-glutamine. Active-site residues include H336 and E338.

Belongs to the CarA family. Composed of two chains; the small (or glutamine) chain promotes the hydrolysis of glutamine to ammonia, which is used by the large (or ammonia) chain to synthesize carbamoyl phosphate. Tetramer of heterodimers (alpha,beta)4.

It catalyses the reaction hydrogencarbonate + L-glutamine + 2 ATP + H2O = carbamoyl phosphate + L-glutamate + 2 ADP + phosphate + 2 H(+). The enzyme catalyses L-glutamine + H2O = L-glutamate + NH4(+). It participates in amino-acid biosynthesis; L-arginine biosynthesis; carbamoyl phosphate from bicarbonate: step 1/1. It functions in the pathway pyrimidine metabolism; UMP biosynthesis via de novo pathway; (S)-dihydroorotate from bicarbonate: step 1/3. In terms of biological role, small subunit of the glutamine-dependent carbamoyl phosphate synthetase (CPSase). CPSase catalyzes the formation of carbamoyl phosphate from the ammonia moiety of glutamine, carbonate, and phosphate donated by ATP, constituting the first step of 2 biosynthetic pathways, one leading to arginine and/or urea and the other to pyrimidine nucleotides. The small subunit (glutamine amidotransferase) binds and cleaves glutamine to supply the large subunit with the substrate ammonia. The polypeptide is Carbamoyl phosphate synthase small chain (Methanococcus maripaludis (strain C7 / ATCC BAA-1331)).